The sequence spans 205 residues: Disintegrin-like leberagin-C (205 aa).

One can recognise a Disintegrin domain in the interval 4-90; that stretch reads PPVCGNELLE…DCPIDRFHRN (87 aa). 9 disulfide bridges follow: Cys-7-Cys-26, Cys-18-Cys-36, Cys-62-Cys-82, Cys-69-Cys-94, Cys-101-Cys-106, Cys-113-Cys-128, Cys-151-Cys-158, Cys-163-Cys-171, and Cys-193-Cys-198. A D/ECD-tripeptide motif is present at residues 68–70; it reads ECD. Asn-120 is a glycosylation site (N-linked (GlcNAc...) asparagine).

It belongs to the venom metalloproteinase (M12B) family. P-III subfamily. P-IIIb sub-subfamily. In terms of assembly, monomer. Expressed by the venom gland.

It localises to the secreted. Inhibits platelet aggregation induced by thrombin and arachidonic acid with IC(50) of 40 and 50 nM respectively (in rabbit platetelet-rich plasma). It also inhibits the adhesion of melanoma tumor cells on fibrinogen and fibronectin, by interfering with the function of alpha-V/beta-3 (ITGAV/ITGB3) and, to a lesser extent, with alpha-V/beta-6 (ITGAV/ITGB6) and alpha-5/beta-1 (ITGA5/ITGB1) integrins. This Macrovipera lebetina transmediterranea (Blunt-nosed viper) protein is Disintegrin-like leberagin-C.